Here is a 382-residue protein sequence, read N- to C-terminus: MSDKYYRSAYMNVDLNAVASNFKVFSTLHPNKTVMAVVKANAYGLGSVKVARHLMENGATFFAVATLDEAIELRMHGITAKILVLGVLPAKDIDKAIQHRVALTVPSKQWLKEAIKNISGEQEKKLWLHIKLDTGMGRLGIKDTKTYQEVIEIIQQYEQLVFEGVFTHFACADEPGDMTTEQYHRFKDMVNEAIKPEYIHCQNSAGSLLMDCQFCNAIRPGISLYGYYPSEYVQQKVKVHLKPSVQLIANVVQTKTLQAGESVSYGATYTATDPTTIALLPIGYADGYLRIMQGSFVNVNGHQCEVIGRVCMDQTIVKVPDQVKAGDSVILIDNHRESPQSVEVAAEKQHTINYEVLCNLSRRLPRIYHDGDQRFVTNELLK.

Lys-39 serves as the catalytic Proton acceptor; specific for D-alanine. Position 39 is an N6-(pyridoxal phosphate)lysine (Lys-39). Substrate is bound at residue Arg-138. The active-site Proton acceptor; specific for L-alanine is the Tyr-265. A substrate-binding site is contributed by Met-312.

This sequence belongs to the alanine racemase family. The cofactor is pyridoxal 5'-phosphate.

The enzyme catalyses L-alanine = D-alanine. The protein operates within amino-acid biosynthesis; D-alanine biosynthesis; D-alanine from L-alanine: step 1/1. Its function is as follows. Catalyzes the interconversion of L-alanine and D-alanine. May also act on other amino acids. The chain is Alanine racemase 1 (alr1) from Staphylococcus aureus (strain MRSA252).